The primary structure comprises 312 residues: Olfactory receptor 51A7 (312 aa).

The Extracellular segment spans residues 1 to 25 (MSVLNNSEVKLFLLIGIPGLEHAHI). A glycan (N-linked (GlcNAc...) asparagine) is linked at N5. A helical membrane pass occupies residues 26–46 (WFSIPICLMYLLAIMGNCTIL). Residues 47–54 (FIIKTEPS) lie on the Cytoplasmic side of the membrane. The helical transmembrane segment at 55–75 (LHEPMYYFLAMLAVSDMGLSL) threads the bilayer. The Extracellular portion of the chain corresponds to 76–99 (SSLPTMLRVFLFNAMGISPNACFA). An intrachain disulfide couples C97 to C189. Residues 100–120 (QEFFIHGFTVMESSVLLIMSL) form a helical membrane-spanning segment. Residues 121–139 (DRFLAIHNPLRYSSILTSN) lie on the Cytoplasmic side of the membrane. A helical transmembrane segment spans residues 140-160 (RVAKMGLILAIRSILLVIPFP). Residues 161-196 (FTLRRLKYCQKNLLSHSYCLHQDTMKLACSDNKTNV) lie on the Extracellular side of the membrane. An N-linked (GlcNAc...) asparagine glycan is attached at N192. Residues 197-216 (IYGFFIALCTMLDLALIVLS) form a helical membrane-spanning segment. Residues 217–236 (YVLILKTILSIASLAERLKA) lie on the Cytoplasmic side of the membrane. A helical transmembrane segment spans residues 237–257 (LNTCVSHICAVLTFYVPIITL). Over 258–272 (AAMHHFAKHKSPLVV) the chain is Extracellular. Residues 273–293 (ILIADMFLLVPPLMNPIVYCV) form a helical membrane-spanning segment. At 294–312 (KTRQIWEKILGKLLNVCGR) the chain is on the cytoplasmic side.

Belongs to the G-protein coupled receptor 1 family.

It is found in the cell membrane. Its function is as follows. Odorant receptor. The protein is Olfactory receptor 51A7 (OR51A7) of Homo sapiens (Human).